The following is a 398-amino-acid chain: Enolase (398 aa).

Gln154 lines the (2R)-2-phosphoglycerate pocket. Glu196 serves as the catalytic Proton donor. Mg(2+)-binding residues include Asp232, Glu273, and Asp300. (2R)-2-phosphoglycerate contacts are provided by Lys325, Arg354, Ser355, and Lys376. Lys325 serves as the catalytic Proton acceptor.

The protein belongs to the enolase family. The cofactor is Mg(2+).

It localises to the cytoplasm. Its subcellular location is the secreted. The protein localises to the cell surface. The enzyme catalyses (2R)-2-phosphoglycerate = phosphoenolpyruvate + H2O. The protein operates within carbohydrate degradation; glycolysis; pyruvate from D-glyceraldehyde 3-phosphate: step 4/5. Catalyzes the reversible conversion of 2-phosphoglycerate (2-PG) into phosphoenolpyruvate (PEP). It is essential for the degradation of carbohydrates via glycolysis. The protein is Enolase of Halobacterium salinarum (strain ATCC 700922 / JCM 11081 / NRC-1) (Halobacterium halobium).